The sequence spans 59 residues: Conotoxin mr5a (59 aa).

The first 22 residues, Met-1–Ala-22, serve as a signal peptide directing secretion. The propeptide occupies Arg-23–Asp-48.

In terms of processing, contains 2 disulfide bonds that can be either 'C1-C3, C2-C4' or 'C1-C4, C2-C3', since these disulfide connectivities have been observed for conotoxins with cysteine framework V (for examples, see AC P0DQQ7 and AC P81755). As to expression, expressed by the venom duct.

It localises to the secreted. This is Conotoxin mr5a from Conus marmoreus (Marble cone).